The following is a 139-amino-acid chain: 3-hydroxyacyl-[acyl-carrier-protein] dehydratase FabZ (139 aa).

Residue His-46 is part of the active site.

The protein belongs to the thioester dehydratase family. FabZ subfamily.

Its subcellular location is the cytoplasm. It carries out the reaction a (3R)-hydroxyacyl-[ACP] = a (2E)-enoyl-[ACP] + H2O. Functionally, involved in unsaturated fatty acids biosynthesis. Catalyzes the dehydration of short chain beta-hydroxyacyl-ACPs and long chain saturated and unsaturated beta-hydroxyacyl-ACPs. This Streptococcus pyogenes serotype M1 protein is 3-hydroxyacyl-[acyl-carrier-protein] dehydratase FabZ.